The chain runs to 370 residues: Chorismate synthase (370 aa).

NADP(+) contacts are provided by arginine 48 and arginine 54. Residues 130–132 (RSS), 242–243 (NA), glycine 287, 302–306 (KPTSS), and arginine 328 each bind FMN.

The protein belongs to the chorismate synthase family. In terms of assembly, homotetramer. FMNH2 serves as cofactor.

It catalyses the reaction 5-O-(1-carboxyvinyl)-3-phosphoshikimate = chorismate + phosphate. Its pathway is metabolic intermediate biosynthesis; chorismate biosynthesis; chorismate from D-erythrose 4-phosphate and phosphoenolpyruvate: step 7/7. Its function is as follows. Catalyzes the anti-1,4-elimination of the C-3 phosphate and the C-6 proR hydrogen from 5-enolpyruvylshikimate-3-phosphate (EPSP) to yield chorismate, which is the branch point compound that serves as the starting substrate for the three terminal pathways of aromatic amino acid biosynthesis. This reaction introduces a second double bond into the aromatic ring system. This Xanthobacter autotrophicus (strain ATCC BAA-1158 / Py2) protein is Chorismate synthase.